A 171-amino-acid chain; its full sequence is Ribosome maturation factor RimM (171 aa).

The PRC barrel domain maps to 97-170 (EGEYYYHEII…LVTIHVMEGL (74 aa)).

It belongs to the RimM family. In terms of assembly, binds ribosomal protein uS19.

Its subcellular location is the cytoplasm. Functionally, an accessory protein needed during the final step in the assembly of 30S ribosomal subunit, possibly for assembly of the head region. Essential for efficient processing of 16S rRNA. May be needed both before and after RbfA during the maturation of 16S rRNA. It has affinity for free ribosomal 30S subunits but not for 70S ribosomes. The protein is Ribosome maturation factor RimM of Bacillus cereus (strain ZK / E33L).